The primary structure comprises 827 residues: Copper-transporting ATPase 2 (827 aa).

HMA domains follow at residues 15–80 (VSTN…YAPR) and 82–148 (ATEE…YELR). The Cu cation site is built by Cys-26, Cys-29, Cys-93, and Cys-96. 6 helical membrane passes run 174-194 (VTIS…SHFI), 210-230 (NLYL…LRFF), 246-266 (SLVV…TFVP), 271-291 (SGTA…VLLG), 430-450 (GWFV…WYTF), and 458-478 (FALV…MGLA). Asp-515 (4-aspartylphosphate intermediate) is an active-site residue. Residues Asp-714 and Asp-718 each coordinate Mg(2+). A run of 2 helical transmembrane segments spans residues 771 to 793 (NLFW…LYPV) and 797 to 819 (LLSP…GNAL).

This sequence belongs to the cation transport ATPase (P-type) (TC 3.A.3) family. Type IB subfamily.

It is found in the cell membrane. The catalysed reaction is Cu(2+)(in) + ATP + H2O = Cu(2+)(out) + ADP + phosphate + H(+). Functionally, involved in copper transport. This chain is Copper-transporting ATPase 2 (actP2), found in Rhizobium meliloti (strain 1021) (Ensifer meliloti).